Reading from the N-terminus, the 349-residue chain is Divinyl chlorophyll a/b light-harvesting protein PcbB (349 aa).

6 helical membrane-spanning segments follow: residues 27 to 47, 57 to 77, 91 to 113, 201 to 221, 241 to 261, and 306 to 326; these read FIAA…AATL, LPMG…GIGF, IAIL…SVYF, VMGG…FHIA, AILS…AFWA, and LVNV…WHAL.

It belongs to the PsbB/PsbC family. IsiA/Pcb subfamily. In terms of assembly, the antenna complex consists of divinyl chlorophylls (a and b) and divinyl chlorophyll a/b binding proteins and binds more divinyl chlorophyll b than does the antenna complex from high-light-adapted Prochlorococcus. The cofactor is divinyl chlorophyll a. Divinyl chlorophyll b is required as a cofactor.

It localises to the cellular thylakoid membrane. Its function is as follows. The antenna complex functions as a light receptor, it captures and delivers excitation energy to photosystems II and I. The Prochlorales pcb genes are not related to higher plant LHCs. The sequence is that of Divinyl chlorophyll a/b light-harvesting protein PcbB (pcbB) from Prochlorococcus marinus (strain SARG / CCMP1375 / SS120).